Reading from the N-terminus, the 756-residue chain is Polyribonucleotide nucleotidyltransferase (756 aa).

Mg(2+) contacts are provided by D527 and D533. The KH domain occupies P593 to I652. The 70-residue stretch at G664–V733 folds into the S1 motif domain.

This sequence belongs to the polyribonucleotide nucleotidyltransferase family. Mg(2+) is required as a cofactor.

It localises to the cytoplasm. The catalysed reaction is RNA(n+1) + phosphate = RNA(n) + a ribonucleoside 5'-diphosphate. Its function is as follows. Involved in mRNA degradation. Catalyzes the phosphorolysis of single-stranded polyribonucleotides processively in the 3'- to 5'-direction. The chain is Polyribonucleotide nucleotidyltransferase from Mycolicibacterium gilvum (strain PYR-GCK) (Mycobacterium gilvum (strain PYR-GCK)).